Reading from the N-terminus, the 89-residue chain is Probable Fe(2+)-trafficking protein (89 aa).

It belongs to the Fe(2+)-trafficking protein family.

Functionally, could be a mediator in iron transactions between iron acquisition and iron-requiring processes, such as synthesis and/or repair of Fe-S clusters in biosynthetic enzymes. This Acinetobacter baumannii (strain AB0057) protein is Probable Fe(2+)-trafficking protein.